The primary structure comprises 365 residues: MNTFGREFRITTFGESHGKAIGVVIDGVPAGLELTEEDIKRELERRMFCHIPVLNPRCEPEEVEILSGVKEGYTQGTPIAVVIWNRRVISSYYEELWMKPRPGHADFAYYLKYGRYYDHRGGGRASGRTTAAVVAAGAVAKKILALAGAEVAGHIVELGGVEINASYTYEDVKKSWERPLPVVDQQALDKMLEKIQEAAARGDSIGGGVEVWAVGVPPGLGEPHFGKIKADIAAAAFSIPGAIALDWGMGRALAKMWGSEANDPITVANGRPTLATNKIGGVLGGITVGTPIYFRVWFKPTPSVRKPQQTVDLAKMEPTTIEFKGRYDVSIVPKALVALEAITAVTLADHLLRAGLIRRDKPLEK.

Arg46 contributes to the NADP(+) binding site. FMN is bound by residues 124-126 (RAS), Gly284, 299-303 (KPTPS), and Arg326.

Belongs to the chorismate synthase family. Requires FMNH2 as cofactor.

The catalysed reaction is 5-O-(1-carboxyvinyl)-3-phosphoshikimate = chorismate + phosphate. It functions in the pathway metabolic intermediate biosynthesis; chorismate biosynthesis; chorismate from D-erythrose 4-phosphate and phosphoenolpyruvate: step 7/7. Catalyzes the anti-1,4-elimination of the C-3 phosphate and the C-6 proR hydrogen from 5-enolpyruvylshikimate-3-phosphate (EPSP) to yield chorismate, which is the branch point compound that serves as the starting substrate for the three terminal pathways of aromatic amino acid biosynthesis. This reaction introduces a second double bond into the aromatic ring system. This is Chorismate synthase from Pyrobaculum islandicum (strain DSM 4184 / JCM 9189 / GEO3).